The chain runs to 214 residues: MRAELAVYFIAGTQDIVRGTLPGVLEEALKAGITCFQYREKGVGSLQTASERKEMALECQQLCAKYQVPFIINDDVALALEIGADGIHVGQNDEGIRQVIASCAGKMKIGLSVHSVSEAAEAERLGAVDYIGVGPIFPTISKADAEPVSGTAILEEIRRAGIKLPIVGIGGINEKNSAEVLTAGADGVSVISAITRSDDCYSVIKQLKNPGSPS.

4-amino-2-methyl-5-(diphosphooxymethyl)pyrimidine-binding positions include 37-41 (QYREK) and N73. Mg(2+) is bound by residues D74 and D93. Residue S112 coordinates 4-amino-2-methyl-5-(diphosphooxymethyl)pyrimidine. 139–141 (TIS) serves as a coordination point for 2-[(2R,5Z)-2-carboxy-4-methylthiazol-5(2H)-ylidene]ethyl phosphate. Residue K142 participates in 4-amino-2-methyl-5-(diphosphooxymethyl)pyrimidine binding. 2-[(2R,5Z)-2-carboxy-4-methylthiazol-5(2H)-ylidene]ethyl phosphate-binding positions include G171 and 191 to 192 (IS).

This sequence belongs to the thiamine-phosphate synthase family. Mg(2+) serves as cofactor.

The enzyme catalyses 2-[(2R,5Z)-2-carboxy-4-methylthiazol-5(2H)-ylidene]ethyl phosphate + 4-amino-2-methyl-5-(diphosphooxymethyl)pyrimidine + 2 H(+) = thiamine phosphate + CO2 + diphosphate. It carries out the reaction 2-(2-carboxy-4-methylthiazol-5-yl)ethyl phosphate + 4-amino-2-methyl-5-(diphosphooxymethyl)pyrimidine + 2 H(+) = thiamine phosphate + CO2 + diphosphate. The catalysed reaction is 4-methyl-5-(2-phosphooxyethyl)-thiazole + 4-amino-2-methyl-5-(diphosphooxymethyl)pyrimidine + H(+) = thiamine phosphate + diphosphate. It functions in the pathway cofactor biosynthesis; thiamine diphosphate biosynthesis; thiamine phosphate from 4-amino-2-methyl-5-diphosphomethylpyrimidine and 4-methyl-5-(2-phosphoethyl)-thiazole: step 1/1. Functionally, condenses 4-methyl-5-(beta-hydroxyethyl)thiazole monophosphate (THZ-P) and 2-methyl-4-amino-5-hydroxymethyl pyrimidine pyrophosphate (HMP-PP) to form thiamine monophosphate (TMP). This Listeria monocytogenes serotype 4a (strain HCC23) protein is Thiamine-phosphate synthase.